A 327-amino-acid polypeptide reads, in one-letter code: Leucotoxin LukDv (327 aa).

The signal sequence occupies residues M1–A26.

It belongs to the aerolysin family. As to quaternary structure, toxicity requires sequential binding and synergistic association of a class S and a class F component which form heterooligomeric complexes. LukEv (class S) associates with LukDv (class F).

It localises to the secreted. Functionally, part of a bi-component leucotoxin that acts by forming pores in the membrane of the target cells. The activity of LukEv-LukDv to rabbit leukocytes is similar to that of the Panton-Valentine leucocidin (PVL). LukEv-LukDv is hemolytic to rabbit red blood cells although the activity is only 8% of gamma-hemolysin. In Staphylococcus aureus (strain NCTC 8325 / PS 47), this protein is Leucotoxin LukDv (lukDv).